A 359-amino-acid chain; its full sequence is MFIKLSSTNSTSIFWLPIFFYNEPYWAQCAISSAELPFYMLSAYVVFVSCRIMLKIQLFHDNLMYIGVPMFGSWFLLIAGKLITILYRVRILNVESVKIHENWVFWTDEPEKMLNVQSLDGLVPLLVAGFLEIHFGFSVIFVGLAIVTERVIASMLIDNYEQSTSLLIPISFIIIYQFLAISISLGILFNILGLYVLNASWILCILIGTIMYYYIRKINTKWLQEMQNPNRKRVFTVSQQFQVRENLGAIAIGKRLVFVVLATIVVMGFGIVALVLEITVLFFMHFGENTLFCYPLYIFLVVMNGHPAWKQEFRKYFPKIKIFKKVRPGLVSVEIVEDQKKKLSLETDTYFRQLKSAWT.

The next 7 helical transmembrane spans lie at 29–49 (CAIS…VFVS), 66–86 (IGVP…ITIL), 127–147 (VAGF…LAIV), 172–192 (FIII…FNIL), 195–215 (YVLN…YYYI), 256–276 (LVFV…ALVL), and 282–302 (FFMH…FLVV).

It belongs to the nematode receptor-like protein sre family.

The protein resides in the membrane. In Caenorhabditis elegans, this protein is Serpentine receptor class epsilon-26 (sre-26).